A 430-amino-acid chain; its full sequence is N-lysine methyltransferase SMYD2-A (430 aa).

The region spanning 5–239 is the SET domain; it reads EGLERFDSPG…AGDEVFTSYI (235 aa). Residue 15–17 participates in S-adenosyl-L-methionine binding; the sequence is KGR. Zn(2+) is bound by residues Cys50, Cys53, Cys63, Cys66, Cys72, Cys76, His84, and Cys88. Residues 50 to 88 form an MYND-type zinc finger; sequence CDFCFARKEGLSKCGKCKQAFYCNVDCQKGDWPMHKLEC. S-adenosyl-L-methionine is bound by residues His135, 204–205, and 256–258; these read NH and YFF.

The protein belongs to the class V-like SAM-binding methyltransferase superfamily.

The protein localises to the cytoplasm. Its subcellular location is the cytosol. It is found in the nucleus. The enzyme catalyses L-lysyl(4)-[histone H3] + 3 S-adenosyl-L-methionine = N(6),N(6),N(6)-trimethyl-L-lysyl(4)-[histone H3] + 3 S-adenosyl-L-homocysteine + 3 H(+). The catalysed reaction is L-lysyl-[protein] + S-adenosyl-L-methionine = N(6)-methyl-L-lysyl-[protein] + S-adenosyl-L-homocysteine + H(+). Protein-lysine N-methyltransferase that methylates both histones and non-histone proteins, including p53/TP53 and RB1. Specifically trimethylates histone H3 'Lys-4' (H3K4me3) in vivo. The activity requires interaction with HSP90alpha. Shows even higher methyltransferase activity on p53/TP53. Monomethylates 'Lys-370' of p53/TP53, leading to decreased DNA-binding activity and subsequent transcriptional regulation activity of p53/TP53. Monomethylates RB1 at 'Lys-860'. This is N-lysine methyltransferase SMYD2-A (smyd2-a) from Xenopus laevis (African clawed frog).